The chain runs to 876 residues: Aspartate--tRNA(Asp/Asn) ligase (876 aa).

The segment at 1–278 is unknown; it reads MAATDTPWRP…FGFKRAYEGF (278 aa). The interval 279 to 876 is aspartyl-tRNA synthetase; that stretch reads MHVYRSHTCG…PKPKKEVKEG (598 aa). Glu453 serves as a coordination point for L-aspartate. The tract at residues 477–480 is aspartate; it reads QQFK. L-aspartate-binding residues include Arg499 and His729. 499 to 501 is an ATP binding site; the sequence is RDE. Residue Glu763 coordinates ATP. Arg770 lines the L-aspartate pocket. 815–818 is an ATP binding site; that stretch reads GVDR.

Belongs to the class-II aminoacyl-tRNA synthetase family. Type 1 subfamily. As to quaternary structure, homodimer.

The protein localises to the cytoplasm. It catalyses the reaction tRNA(Asx) + L-aspartate + ATP = L-aspartyl-tRNA(Asx) + AMP + diphosphate. In terms of biological role, aspartyl-tRNA synthetase with relaxed tRNA specificity since it is able to aspartylate not only its cognate tRNA(Asp) but also tRNA(Asn). Reaction proceeds in two steps: L-aspartate is first activated by ATP to form Asp-AMP and then transferred to the acceptor end of tRNA(Asp/Asn). The protein is Aspartate--tRNA(Asp/Asn) ligase (aspS) of Paramagnetospirillum magneticum (strain ATCC 700264 / AMB-1) (Magnetospirillum magneticum).